A 183-amino-acid chain; its full sequence is Dual-action ribosomal maturation protein DarP (183 aa).

Belongs to the DarP family.

The protein localises to the cytoplasm. Its function is as follows. Member of a network of 50S ribosomal subunit biogenesis factors which assembles along the 30S-50S interface, preventing incorrect 23S rRNA structures from forming. Promotes peptidyl transferase center (PTC) maturation. In Shigella boydii serotype 18 (strain CDC 3083-94 / BS512), this protein is Dual-action ribosomal maturation protein DarP.